A 318-amino-acid polypeptide reads, in one-letter code: Guanidinopropionase (318 aa).

Histidine 126, aspartate 148, histidine 150, aspartate 152, aspartate 240, and aspartate 242 together coordinate Mn(2+).

It belongs to the arginase family. Agmatinase subfamily. Homohexamer. Requires Mn(2+) as cofactor.

It carries out the reaction 3-guanidinopropanoate + H2O = urea + beta-alanine. Its function is as follows. Catalyzes the hydrolysis of 3-guanidinopropanoate to beta-alanine and urea. Possesses low activity against 4-guanidinobutanoate. Has no activity against arginine and agmatine. This chain is Guanidinopropionase (gpuA), found in Pseudomonas aeruginosa (strain ATCC 15692 / DSM 22644 / CIP 104116 / JCM 14847 / LMG 12228 / 1C / PRS 101 / PAO1).